Consider the following 88-residue polypeptide: Selenoprotein W (88 aa).

The cysteinyl-selenocysteine (Cys-Sec); redox-active cross-link spans 10-13 (CGAU). Residue Sec-13 is a non-standard amino acid, selenocysteine. Position 37 is an S-glutathionyl cysteine (Cys-37).

The protein belongs to the SelWTH family. Selenoprotein W subfamily. In terms of assembly, interacts with DPYSL2, PRDX1, YWHAB, YWHAG, HSP70 and HSP90. In the embryo, expressed in the developing nervous system and in mesoderm-derived tissues such as heart and limbs. In the adult, predominantly expressed in brain, skeletal muscle and heart.

It localises to the cytoplasm. In terms of biological role, plays a role as a glutathione (GSH)-dependent antioxidant. May be involved in a redox-related process. May play a role in the myopathies of selenium deficiency. This Mus musculus (Mouse) protein is Selenoprotein W.